A 2896-amino-acid chain; its full sequence is Protein PRRC2C (2896 aa).

Residue Lys27 is modified to N6-acetyllysine. A disordered region spans residues 28 to 212 (GKSLETQKTT…STAGTSEQND (185 aa)). Positions 88–97 (QEQHEEEKTP) are enriched in basic and acidic residues. A compositionally biased stretch (low complexity) spans 105–119 (KPGVAAPPEVAPAPK). A compositionally biased stretch (polar residues) spans 134-144 (QVNSQFQQEFP). Positions 151 to 160 (DQEKKEKETN) are enriched in basic and acidic residues. Phosphoserine is present on residues Ser187 and Ser191. Positions 201–211 (DESTAGTSEQN) are enriched in polar residues. Asymmetric dimethylarginine; alternate is present on Arg242. Position 242 is an omega-N-methylarginine; alternate (Arg242). Asymmetric dimethylarginine is present on residues Arg255 and Arg266. Disordered stretches follow at residues 264–729 (PMRF…QHLA) and 750–788 (SGRP…SFEH). Arg279 and Arg281 each carry omega-N-methylarginine. A compositionally biased stretch (basic and acidic residues) spans 301–310 (ELKELDKFDN). Phosphoserine is present on Ser335. Positions 341-358 (GSNSPKENNSEDQGSKAS) are enriched in polar residues. The segment covering 359–368 (ENNENKKETD) has biased composition (basic and acidic residues). Positions 370-381 (VSNTKSSSQIPA) are enriched in polar residues. Lys392 is subject to N6-acetyllysine. Phosphoserine is present on residues Ser395 and Ser500. Residues 395–405 (SFNQERGTSSH) show a composition bias toward polar residues. Over residues 465-648 (RREEEERRME…EATPVVHETE (184 aa)) the composition is skewed to basic and acidic residues. Residues 676–708 (QRQQEQMKQQQWQQQQQQGVLPQTVPSQPSSST) are compositionally biased toward low complexity. Over residues 759-769 (PIHPGMIPPKP) the composition is skewed to pro residues. 3 positions are modified to phosphoserine: Ser779, Ser785, and Ser801. Positions 804–1118 (RMLWGSDPYP…PVSTVQVEPA (315 aa)) are disordered. Basic and acidic residues-rich tracts occupy residues 825-836 (ATEEPEDVRSEA), 852-867 (NQLE…RESS), and 878-888 (SVEDVRPHHTD). Ser867, Ser878, Ser920, and Ser929 each carry phosphoserine. Basic and acidic residues-rich tracts occupy residues 954–993 (IDSK…ETRW), 1000–1010 (NRREEVNDRPV), and 1020–1058 (VLRD…KKDL). Positions 1020-1046 (VLRDMKEEREQRKEKEGEKAEKVTEKV) form a coiled coil. The segment covering 1059–1081 (PPPPPPPQPPAPIQPQSVPPPIQ) has biased composition (pro residues). Polar residues predominate over residues 1089-1100 (STETATLAQKPS). Residue Lys1133 forms a Glycyl lysine isopeptide (Lys-Gly) (interchain with G-Cter in SUMO2) linkage. Composition is skewed to basic and acidic residues over residues 1143–1163 (SKDL…KKES), 1170–1180 (YWKEARERDWF), 1214–1230 (HTRD…RAEH), and 1237–1248 (RQREESETRSES). 8 disordered regions span residues 1143 to 1647 (SKDL…DALS), 1670 to 1785 (EDPQ…SAPV), 1905 to 1991 (APAS…TAEL), 2005 to 2164 (ISKK…VSEM), 2218 to 2238 (LPNT…SLTS), 2257 to 2290 (WENS…GPST), 2317 to 2341 (GAGT…NICK), and 2668 to 2701 (DIKP…QSSK). A phosphoserine mark is found at Ser1242, Ser1246, Ser1248, Ser1249, and Ser1263. Composition is skewed to basic and acidic residues over residues 1261–1297 (RGSE…ENKK), 1305–1330 (FKPD…DKAK), 1381–1418 (EVPK…PARE), and 1429–1446 (PRQD…REAA). Residues Thr1265 and Thr1267 each carry the phosphothreonine modification. Polar residues-rich tracts occupy residues 1457–1469 (TNGT…QEPV) and 1477–1491 (GNKT…SSDQ). Residues 1505–1517 (FNERRERDEKKNA) show a composition bias toward basic and acidic residues. Ser1544 is modified (phosphoserine). Composition is skewed to basic and acidic residues over residues 1620–1634 (NSKD…DPKP) and 1692–1704 (RLQD…KEEQ). Positions 1682–1717 (TEVVSKKQQKRLQDEERRKKEEQVIQVWNKKNANEK) form a coiled coil. Positions 1742 to 1785 (SSASVPPLASAPLPPSTSASVPASTSAPLPATLTPVPASTSAPV) are enriched in low complexity. Pro residues predominate over residues 1913 to 1929 (APAPTPVSAPNPAPPAP). Residues 1943–1952 (PLQTTSQSSK) are compositionally biased toward low complexity. At Thr1965 the chain carries Phosphothreonine. Residues 1976 to 1986 (KSIQTPQSHGT) show a composition bias toward polar residues. Phosphoserine is present on residues Ser1983 and Ser2013. The segment covering 2019 to 2035 (SVSAWNKPLTSFGSAPS) has biased composition (polar residues). Positions 2075 to 2088 (KSADKIPEPKEQRQ) are enriched in basic and acidic residues. Phosphoserine is present on Ser2105. The span at 2108 to 2132 (ENKEHKPGPIGKERSLKNRKVKDAQ) shows a compositional bias: basic and acidic residues. Ser2143 bears the Phosphoserine mark. The segment covering 2257 to 2267 (WENSPNVREKG) has biased composition (basic and acidic residues). Ser2260 carries the phosphoserine modification. Residues 2269–2290 (PVTSTAPPIATGVSSSASGPST) are compositionally biased toward polar residues. Over residues 2320 to 2334 (TYTTSSLSTKSTTTS) the composition is skewed to low complexity. Phosphothreonine is present on residues Thr2673 and Thr2682. The span at 2679 to 2701 (RSTTPTSSPFRATSTSPNSQSSK) shows a compositional bias: polar residues. Residues Ser2686 and Ser2694 each carry the phosphoserine modification. At Arg2814 the chain carries Omega-N-methylarginine. Arg2823 carries the post-translational modification Asymmetric dimethylarginine; alternate. Residue Arg2823 is modified to Omega-N-methylarginine; alternate. The segment covering 2824–2833 (FFSEQQQSKQ) has biased composition (polar residues). Positions 2824-2896 (FFSEQQQSKQ…QAIKTEETKS (73 aa)) are disordered.

In terms of tissue distribution, overexpressed in bladder cancer.

It is found in the cytoplasm. Its subcellular location is the stress granule. Required for efficient formation of stress granules. This is Protein PRRC2C from Homo sapiens (Human).